The sequence spans 65 residues: Conotoxin VnMLCL-041 (65 aa).

The N-terminal stretch at 1–19 is a signal peptide; the sequence is MLCLPVFIILLLLASPAAP. Residues 20 to 43 constitute a propeptide that is removed on maturation; it reads NPLQTRIQSNLIRAGPEDANIKTD. K64 bears the Lysine amide mark.

It belongs to the conotoxin T superfamily. As to expression, expressed by the venom duct.

It localises to the secreted. The protein is Conotoxin VnMLCL-041 of Conus ventricosus (Mediterranean cone).